The chain runs to 296 residues: 4-hydroxybenzoate octaprenyltransferase (296 aa).

A run of 8 helical transmembrane segments spans residues 23 to 43, 46 to 66, 99 to 119, 141 to 161, 163 to 183, 211 to 231, 237 to 257, and 265 to 285; these read IGIL…SPGW, GLVL…GCVM, LALA…PLVV, IPQA…FAAI, GQLP…AIAY, DVFA…WVGV, WPYF…YALI, and CFKA…GVLA.

Belongs to the UbiA prenyltransferase family. The cofactor is Mg(2+).

It localises to the cell inner membrane. It carries out the reaction all-trans-octaprenyl diphosphate + 4-hydroxybenzoate = 4-hydroxy-3-(all-trans-octaprenyl)benzoate + diphosphate. It participates in cofactor biosynthesis; ubiquinone biosynthesis. In terms of biological role, catalyzes the prenylation of para-hydroxybenzoate (PHB) with an all-trans polyprenyl group. Mediates the second step in the final reaction sequence of ubiquinone-8 (UQ-8) biosynthesis, which is the condensation of the polyisoprenoid side chain with PHB, generating the first membrane-bound Q intermediate 3-octaprenyl-4-hydroxybenzoate. The protein is 4-hydroxybenzoate octaprenyltransferase of Methylobacillus flagellatus (strain ATCC 51484 / DSM 6875 / VKM B-1610 / KT).